A 2139-amino-acid polypeptide reads, in one-letter code: Voltage-dependent L-type calcium channel subunit alpha-1C (2139 aa).

The tract at residues 1–20 (MVNENTRMYVPEENHQGSNY) is disordered. The Cytoplasmic segment spans residues 1 to 124 (MVNENTRMYV…RACISIVEWK (124 aa)). Positions 47–68 (GAALSWQAAIDAARQAKLMGSA) are calmodulin-binding. Positions 73 to 98 (ISTVSSTQRKRQQYGKPKKQGGTTAT) are disordered. Basic residues predominate over residues 80–91 (QRKRQQYGKPKK). The I repeat unit spans residues 111–408 (NPIRRACISI…LVLGVLSGEF (298 aa)). A helical membrane pass occupies residues 125–143 (PFEIIILLTIFANCVALAI). Residues 144 to 158 (YIPFPEDDSNATNSN) are Extracellular-facing. N-linked (GlcNAc...) asparagine glycosylation is present at N153. A helical membrane pass occupies residues 159–179 (LERVEYLFLIIFTVEAFLKVI). Over 180–188 (AYGLLFHPN) the chain is Cytoplasmic. Residues 189 to 209 (AYLRNGWNLLDFIIVVVGLFS) traverse the membrane as a helical segment. The Extracellular portion of the chain corresponds to 210–232 (AILEQATKADGANALGGKGAGFD). The chain crosses the membrane as a helical span at residues 233 to 251 (VKALRAFRVLRPLRLVSGV). Topologically, residues 252 to 268 (PSLQVVLNSIIKAMVPL) are cytoplasmic. Residues 269–290 (LHIALLVLFVIIIYAIIGLELF) traverse the membrane as a helical segment. Over 291-350 (MGKMHKTCYNQEGIIDVPAEEDPSPCALETGHGRQCQNGTVCKPGWDGPKHGITNFDNFA) the chain is Extracellular. Cystine bridges form between C298–C326 and C316–C332. N328 carries N-linked (GlcNAc...) asparagine glycosylation. The segment at residues 351-372 (FAMLTVFQCITMEGWTDVLYWM) is an intramembrane region (pore-forming). The Selectivity filter of repeat I signature appears at 361 to 364 (TMEG). E363 provides a ligand contact to Ca(2+). The Extracellular portion of the chain corresponds to 373–380 (QDAMGYEL). A helical membrane pass occupies residues 381–401 (PWVYFVSLVIFGSFFVLNLVL). Over 402-524 (GVLSGEFSKE…RKCRAAVKSN (123 aa)) the chain is Cytoplasmic. The interval 428–445 (QQLEEDLKGYLDWITQAE) is AID/alpha-interaction domain; mediates interaction with the beta subunit. The interval 449–481 (PENEDEGMDEDKPRNMSMPTSETESVNTENVAG) is disordered. Residues 465–478 (SMPTSETESVNTEN) show a composition bias toward polar residues. S469 carries the phosphoserine modification. Residue T476 is modified to Phosphothreonine. One copy of the II repeat lies at 510-756 (NRFCRRKCRA…VFLAIAVDNL (247 aa)). A helical membrane pass occupies residues 525 to 543 (VFYWLVIFLVFLNTLTIAS). Residues 544-554 (EHYNQPHWLTE) lie on the Extracellular side of the membrane. A helical transmembrane segment spans residues 555-575 (VQDTANKALLALFTAEMLLKM). The Cytoplasmic portion of the chain corresponds to 576–586 (YSLGLQAYFVS). Residues 587–606 (LFNRFDCFIVCGGILETILV) traverse the membrane as a helical segment. At 607–615 (ETKIMSPLG) the chain is on the extracellular side. Residues 616 to 634 (ISVLRCVRLLRIFKITRYW) traverse the membrane as a helical segment. The Cytoplasmic portion of the chain corresponds to 635–653 (NSLSNLVASLLNSVRSIAS). A helical transmembrane segment spans residues 654–673 (LLLLLFLFIIIFSLLGMQLF). Residues 674–693 (GGKFNFDEMQTRRSTFDNFP) lie on the Extracellular side of the membrane. The segment at residues 694–715 (QSLLTVFQILTGEDWNSVMYDG) is an intramembrane region (pore-forming). The Selectivity filter of repeat II signature appears at 704-707 (TGED). E706 serves as a coordination point for Ca(2+). The Extracellular portion of the chain corresponds to 716 to 725 (IMAYGGPSFP). Residues 726-745 (GMLVCIYFIILFICGNYILL) traverse the membrane as a helical segment. Residues 746-900 (NVFLAIAVDN…LQCHRIVNDT (155 aa)) are Cytoplasmic-facing. A disordered region spans residues 764–861 (SAQKEEEEEK…EMPVGPRPRP (98 aa)). Over residues 783 to 806 (SPEKKQEVMEKPAVEESKEEKIEL) the composition is skewed to basic and acidic residues. Phosphoserine occurs at positions 808 and 815. The tract at residues 829-876 (SENEDKSPHSNPDTAGEEDEEEPEMPVGPRPRPLSELHLKEKAVPMPE) is interaction with STAC2. Acidic residues predominate over residues 843-852 (AGEEDEEEPE). Residues 887 to 1169 (NRFRLQCHRI…IFVGFVIVTF (283 aa)) form an III repeat. Residues 901–919 (IFTNLILFFILLSSISLAA) form a helical membrane-spanning segment. Residues 920–931 (EDPVQHTSFRNH) lie on the Extracellular side of the membrane. A helical membrane pass occupies residues 932 to 951 (ILGNADYVFTSIFTLEIILK). The Cytoplasmic portion of the chain corresponds to 952–967 (MTAYGAFLHKGSFCRN). Residues 968-986 (YFNILDLLVVSVSLISFGI) form a helical membrane-spanning segment. The Extracellular portion of the chain corresponds to 987–993 (QSSAINV). A helical membrane pass occupies residues 994–1012 (VKILRVLRVLRPLRAINRA). Residues 1013 to 1031 (KGLKHVVQCVFVAIRTIGN) lie on the Cytoplasmic side of the membrane. A helical membrane pass occupies residues 1032-1051 (IVIVTTLLQFMFACIGVQLF). Residues 1052-1101 (KGKLYTCSDSSKQTEAECKGNYITYKDGEVDHPIIQPRSWENSKFDFDNV) are Extracellular-facing. A disulfide bridge links C1058 with C1069. The dihydropyridine binding stretch occupies residues 1089 to 1178 (RSWENSKFDF…FQEQGEQEYK (90 aa)). The pore-forming intramembrane region spans 1102 to 1122 (LAAMMALFTVSTFEGWPELLY). Residues 1113 to 1116 (TFEG) carry the Selectivity filter of repeat III motif. E1115 is a Ca(2+) binding site. Over 1123-1139 (RSIDSHTEDKGPIYNYR) the chain is Extracellular. Residues 1140-1161 (VEISIFFIIYIIIIAFFMMNIF) form a helical membrane-spanning segment. Over 1162–1219 (VGFVIVTFQEQGEQEYKNCELDKNQRQCVEYALKARPLRRYIPKNQHQYKVWYVVNST) the chain is Cytoplasmic. The IV repeat unit spans residues 1206–1479 (NQHQYKVWYV…LFVAVIMDNF (274 aa)). The chain crosses the membrane as a helical span at residues 1220 to 1241 (YFEYLMFVLILLNTICLAMQHY). Residues 1242–1249 (GQSCLFKI) are Extracellular-facing. The helical transmembrane segment at 1250–1271 (AMNILNMLFTGLFTVEMILKLI) threads the bilayer. Residues 1272–1281 (AFKPKGYFSD) are Cytoplasmic-facing. Residues 1282-1301 (PWNVFDFLIVIGSIIDVILS) form a helical membrane-spanning segment. The Extracellular portion of the chain corresponds to 1302–1324 (ETNPAEHTQCSPSMSAEENSRIS). Residues 1325–1343 (ITFFRLFRVMRLVKLLSRG) traverse the membrane as a helical segment. Topologically, residues 1344-1361 (EGIRTLLWTFIKSFQALP) are cytoplasmic. The chain crosses the membrane as a helical span at residues 1362-1382 (YVALLIVMLFFIYAVIGMQVF). The Extracellular portion of the chain corresponds to 1383–1404 (GKIALNDTTEINRNNNFQTFPQ). Residue N1388 is glycosylated (N-linked (GlcNAc...) asparagine). Positions 1405–1423 (AVLLLFRCATGEAWQDIML) form an intramembrane region, pore-forming. Residues 1414 to 1417 (TGEA) carry the Selectivity filter of repeat IV motif. Residues 1424-1451 (ACMPGKKCAPESEPSNSTEGETPCGSSF) lie on the Extracellular side of the membrane. Residues 1430–1498 (KCAPESEPSN…LGPHHLDEFK (69 aa)) are dihydropyridine binding. The cysteines at positions 1431 and 1447 are disulfide-linked. N1439 carries an N-linked (GlcNAc...) asparagine glycan. Residues 1444-1486 (ETPCGSSFAVFYFISFYMLCAFLIINLFVAVIMDNFDYLTRDW) form a phenylalkylamine binding region. The helical transmembrane segment at 1452–1476 (AVFYFISFYMLCAFLIINLFVAVIM) threads the bilayer. At 1477-2139 (DNFDYLTRDW…ADSRSYVSNL (663 aa)) the chain is on the cytoplasmic side. The important for interaction with STAC1, STAC2 and STAC3 stretch occupies residues 1611 to 1638 (DEVTVGKFYATFLIQEYFRKFKKRKEQG). The calmodulin-binding stretch occupies residues 1611–1644 (DEVTVGKFYATFLIQEYFRKFKKRKEQGLVGKPS). A calmodulin-binding IQ region region spans residues 1617–1637 (KFYATFLIQEYFRKFKKRKEQ). Residues 1651 to 1670 (LQAGLRTLHDIGPEIRRAIS) are important for localization in at the junctional membrane. A phosphoserine mark is found at S1670 and S1691. Polar residues-rich tracts occupy residues 1732–1741 (KTGNNQADTE) and 1751–1763 (STFT…STGS). A disordered region spans residues 1732–1773 (KTGNNQADTESPSHEKLVDSTFTPSSYSSTGSNANINNANNT). Positions 1764–1773 (NANINNANNT) are enriched in low complexity. S1897 carries the post-translational modification Phosphoserine; by PKA. The disordered stretch occupies residues 1940 to 1966 (RSHSPTTFPRPCPTPPVTPGSRGRPLR). The span at 1947–1957 (FPRPCPTPPVT) shows a compositional bias: pro residues.

The protein belongs to the calcium channel alpha-1 subunit (TC 1.A.1.11) family. CACNA1C subfamily. As to quaternary structure, component of a calcium channel complex consisting of a pore-forming alpha subunit (CACNA1C) and ancillary beta, gamma and delta subunits. The channel complex contains alpha, beta, gamma and delta subunits in a 1:1:1:1 ratio, i.e. it contains only one of each type of subunit. CACNA1C channel activity is modulated by ancillary subunits, such as CACNB1, CACNB2, CACNB3, CACNA2D1 and CACNA2D4. Interacts with the gamma subunits CACNG4, CACNG6, CACNG7 and CACNG8. Interacts with CACNB1. Interacts with CACNB2. Identified in a complex with CACNA2D4 and CACNB3. Interacts with CACNB3. Interacts with CACNA2D1. Interacts with CACNA2D4. Interacts with CALM1. Interacts (via the N-terminus and the C-terminal C and IQ motifs) with CABP1; this inhibits Ca(2+)-dependent channel inactivation. The binding via the C motif is calcium independent whereas the binding via IQ requires the presence of calcium and is mutually exclusive with calmodulin binding. The binding to the cytoplasmic N-terminal domain is calcium independent but is essential for the channel modulation. Interacts (via C-terminal CDB motif) with CABP5; in a calcium-dependent manner. Interacts with CIB1; the interaction increases upon cardiomyocytes hypertrophy. Interacts with STAC2 and STAC3; this inhibits channel inactivation. Phosphorylation by PKA at Ser-1897 activates the channel. Elevated levels of blood glucose lead to increased phosphorylation by PKA. Detected in embryonic heart. Detected in retina in rod bipolar cells. Detected in tibialis artery (at protein level). Detected in smooth muscle cells from tibialis artery and in mesenteric artery. High expression in heart, followed by brain and spinal cord.

It localises to the cell membrane. It is found in the sarcolemma. Its subcellular location is the perikaryon. The protein resides in the postsynaptic density membrane. The protein localises to the cell projection. It localises to the dendrite. It is found in the T-tubule. It carries out the reaction Ca(2+)(in) = Ca(2+)(out). Inhibited by dihydropyridines (DHP), such as isradipine. Inhibited by nifedipine. Channel activity is regulated by Ca(2+) and calmodulin. Binding of STAC1, STAC2 or STAC3 to a region that overlaps with the calmodulin binding site inhibits channel inactivation by Ca(2+) and calmodulin. Binding of calmodulin or CABP1 at the same regulatory sites results in opposite effects on the channel function. Shear stress and pressure increases calcium channel activity. Pore-forming, alpha-1C subunit of the voltage-gated calcium channel that gives rise to L-type calcium currents. Mediates influx of calcium ions into the cytoplasm, and thereby triggers calcium release from the sarcoplasm. Plays an important role in excitation-contraction coupling in the heart. Required for normal heart development and normal regulation of heart rhythm. Required for normal contraction of smooth muscle cells in blood vessels and in the intestine. Essential for normal blood pressure regulation via its role in the contraction of arterial smooth muscle cells. Long-lasting (L-type) calcium channels belong to the 'high-voltage activated' (HVA) group. This Mus musculus (Mouse) protein is Voltage-dependent L-type calcium channel subunit alpha-1C (Cacna1c).